The following is a 393-amino-acid chain: Lipid-A-disaccharide synthase (393 aa).

Belongs to the LpxB family.

The enzyme catalyses a lipid X + a UDP-2-N,3-O-bis[(3R)-3-hydroxyacyl]-alpha-D-glucosamine = a lipid A disaccharide + UDP + H(+). It functions in the pathway bacterial outer membrane biogenesis; LPS lipid A biosynthesis. In terms of biological role, condensation of UDP-2,3-diacylglucosamine and 2,3-diacylglucosamine-1-phosphate to form lipid A disaccharide, a precursor of lipid A, a phosphorylated glycolipid that anchors the lipopolysaccharide to the outer membrane of the cell. This is Lipid-A-disaccharide synthase from Actinobacillus pleuropneumoniae serotype 3 (strain JL03).